The primary structure comprises 1175 residues: Potassium/sodium hyperpolarization-activated cyclic nucleotide-gated channel 4 (1175 aa).

The Cytoplasmic segment spans residues 1-259; sequence MDKLPPSMRK…SAGFWIIHPY (259 aa). Positions 17–186 are disordered; sequence QQVGAKAWIM…SSCGEQRPAD (170 aa). Residues 26 to 36 are compositionally biased toward acidic residues; it reads MDEEEDAEEEG. Residues 60–75 are compositionally biased toward low complexity; the sequence is PSAAAAAAGGAESRGA. Gly residues predominate over residues 111-126; it reads SRGGGGGGGSTGGGSH. Positions 128 to 140 are enriched in basic and acidic residues; sequence HLHDSAEERRLIA. Ser145 is modified (phosphoserine). Pro residues predominate over residues 162 to 175; that stretch reads PGAPAPPAASPPQV. A helical membrane pass occupies residues 260-288; sequence SDFRFYWDLTMLLLMVGNLIIIPVGITFF. The Extracellular segment spans residues 289-292; the sequence is KDEN. Residues 293 to 316 form a helical membrane-spanning segment; that stretch reads TTPWIVFNVVSDTFFLIDLVLNFR. Topologically, residues 317 to 329 are cytoplasmic; it reads TGIVVEDNTDIIL. A helical membrane pass occupies residues 330-352; sequence DPRRIKMKYLKSWFVVDFVSSIP. The Extracellular portion of the chain corresponds to 353–374; sequence VDYIFLIVETRIDSEVYKTARA. The helical; Voltage-sensor transmembrane segment at 375–410 threads the bilayer; sequence LRIVRFTKILSLLRLLRLSRLIRYIHQWEEIFHMTY. Topologically, residues 411 to 413 are cytoplasmic; that stretch reads DLA. The chain crosses the membrane as a helical span at residues 414 to 444; it reads SAVVRIVNLIGMMLLLCHWDGCLQFLVPMLQ. Residues 445–449 lie on the Extracellular side of the membrane; sequence DFPDD. Residues 450-478 constitute an intramembrane region (pore-forming); sequence CWVSLNNMVNNSWGKQYSYALFKAMSHML. Residues 479 to 488 lie on the Extracellular side of the membrane; it reads CIGYGRQAPM. A helical transmembrane segment spans residues 489-521; the sequence is GMSDVWLTMLSMIVGATCYAMFIGHATALIQSL. Residues 522-1175 are Cytoplasmic-facing; that stretch reads DSSRRQYQEK…PVRSKLPSNL (654 aa). The 3',5'-cyclic GMP site is built by Tyr560, Lys563, Phe565, and Glu567. The 3',5'-cyclic AMP site is built by Gly660, Glu661, Cys663, Arg670, Thr671, Val674, and Arg711. Disordered regions lie at residues 801–820 and 830–1175; these read AIFR…AGQT and LAPS…PSNL. Composition is skewed to low complexity over residues 839–854, 900–912, 948–966, and 984–1004; these read SPAS…SSAS, LGGS…SPLL, SPTS…LSPG, and RLPF…SPRG. Residues 1038-1050 show a composition bias toward pro residues; sequence ASSPPPPPPPPAP. Phosphoserine is present on residues Ser1089 and Ser1093. A compositionally biased stretch (pro residues) spans 1102 to 1114; sequence PPFPRAPGRPPGA.

The protein belongs to the potassium channel HCN family. Homotetramer. The channel is composed of a homo- or heterotetrameric complex of pore-forming subunits. Interacts with PEX5L with a 4:4 HCN4:PEX5L stoichiometry; reduces the effects of cAMP on the voltage-dependence and rate of activation. Interacts with IRAG1; regulates HCN4 channel activity. Interacts with IRAG2; regulates HCN4 channel activity. In terms of processing, S-palmitoylated. In terms of tissue distribution, highly expressed in the heart sinoatrial node (SAN). Not detected in atrium, ventricle, forebrain or cerebellum. Detected at very low levels in total brain.

The protein localises to the cell membrane. The catalysed reaction is K(+)(in) = K(+)(out). It catalyses the reaction Na(+)(in) = Na(+)(out). Activated by cAMP and to a lesser extent by cGMP and cCMP. cAMP binding causes a conformation change that leads to the assembly of an active tetramer and channel opening by shifting the voltage-dependency towards more positive voltages. Binding of cAMP removes a tonic inhibition conferred by cyclic nucleotide-binding domain (CNBD) on channel opening. Cyclic dinucleotides can modulate HCN4 channel; cyclic dinucleotides acting as potent antagonists of cAMP. Inhibited by extracellular Cs(+) ions. Auxiliary subunits can also regulate HCN4 channel. IRAG1 causes a gain-of-function by shifting HCN4 activation to more depolarized membrane potentials in the absence of cAMP. In contrast, IRAG2 causes a loss-of-function by inhibiting cAMP-dependent potentiation of HCN4 activation. Its function is as follows. Hyperpolarization-activated ion channel that are permeable to Na(+) and K(+) ions with very slow activation and inactivation. Exhibits higher selectivity for K(+) over Na(+) ions. Contributes to the native pacemaker currents in heart (If) that regulate the rhythm of heart beat. Contributes to the native pacemaker currents in neurons (Ih). May mediate responses to sour stimuli. This chain is Potassium/sodium hyperpolarization-activated cyclic nucleotide-gated channel 4 (HCN4), found in Oryctolagus cuniculus (Rabbit).